The sequence spans 330 residues: Aspartate--ammonia ligase (330 aa).

Belongs to the class-II aminoacyl-tRNA synthetase family. AsnA subfamily. In terms of assembly, homodimer.

Its subcellular location is the cytoplasm. The catalysed reaction is L-aspartate + NH4(+) + ATP = L-asparagine + AMP + diphosphate + H(+). It functions in the pathway amino-acid biosynthesis; L-asparagine biosynthesis; L-asparagine from L-aspartate (ammonia route): step 1/1. This chain is Aspartate--ammonia ligase, found in Salmonella typhi.